Here is a 497-residue protein sequence, read N- to C-terminus: Lysine--tRNA ligase (497 aa).

Residues E405 and E412 each contribute to the Mg(2+) site.

Belongs to the class-II aminoacyl-tRNA synthetase family. Homodimer. The cofactor is Mg(2+).

It localises to the cytoplasm. The enzyme catalyses tRNA(Lys) + L-lysine + ATP = L-lysyl-tRNA(Lys) + AMP + diphosphate. The sequence is that of Lysine--tRNA ligase from Gloeobacter violaceus (strain ATCC 29082 / PCC 7421).